The chain runs to 349 residues: MISDRKLEHLILCASCDVEYRKKTGFEDIEIVHRAIPEINKEKIDISLDFLGRELSSPVMISAITGGHPASMKINRELARAAEKLGIALGLGSQRAGVEHPELEGTYTIAREEAPSAMLIGNIGSSHIEYAERAVEMIDADALAVHLNPLQESIQPGGDVDSSGALESISAIVESVDVPVMVKETGAGICSEDAIELESCGVSAIDVAGAGGTSWAAVETYRADDRYLGELFWDWGIPTAASTVEVVESVSIPVIASGGIRSGIDAAKAISLGAEMVGIALPVLEAAGHGYREVIKVIEGFNEALRTAMYLAGAETLDDLKKSPVIITGHTGEWLNQRGFETKKYARRS.

5 to 6 (RK) contributes to the substrate binding site. Residues serine 62, 63–65 (AIT), serine 93, and asparagine 122 each bind FMN. 93–95 (SQR) is a substrate binding site. Residue glutamine 151 participates in substrate binding. Mg(2+) is bound at residue glutamate 152. Residues lysine 183, threonine 213, 259–261 (GIR), and 280–281 (AL) contribute to the FMN site.

This sequence belongs to the IPP isomerase type 2 family. In terms of assembly, homooctamer. Dimer of tetramers. Requires FMN as cofactor. NADPH serves as cofactor. The cofactor is Mg(2+).

The protein resides in the cytoplasm. It carries out the reaction isopentenyl diphosphate = dimethylallyl diphosphate. Functionally, involved in the biosynthesis of isoprenoids. Catalyzes the 1,3-allylic rearrangement of the homoallylic substrate isopentenyl (IPP) to its allylic isomer, dimethylallyl diphosphate (DMAPP). The chain is Isopentenyl-diphosphate delta-isomerase from Methanothermobacter thermautotrophicus (strain ATCC 29096 / DSM 1053 / JCM 10044 / NBRC 100330 / Delta H) (Methanobacterium thermoautotrophicum).